The following is a 507-amino-acid chain: ATP synthase subunit beta (507 aa).

The segment at 1–22 (MSSLANKAKSKGKSSKSKSNVN) is disordered. ATP is bound at residue 183–190 (GGAGVGKT).

The protein belongs to the ATPase alpha/beta chains family. F-type ATPases have 2 components, CF(1) - the catalytic core - and CF(0) - the membrane proton channel. CF(1) has five subunits: alpha(3), beta(3), gamma(1), delta(1), epsilon(1). CF(0) has three main subunits: a(1), b(2) and c(9-12). The alpha and beta chains form an alternating ring which encloses part of the gamma chain. CF(1) is attached to CF(0) by a central stalk formed by the gamma and epsilon chains, while a peripheral stalk is formed by the delta and b chains.

It localises to the cell inner membrane. The enzyme catalyses ATP + H2O + 4 H(+)(in) = ADP + phosphate + 5 H(+)(out). Produces ATP from ADP in the presence of a proton gradient across the membrane. The catalytic sites are hosted primarily by the beta subunits. This is ATP synthase subunit beta from Ehrlichia canis (strain Jake).